We begin with the raw amino-acid sequence, 541 residues long: CRISPR-associated exonuclease Cas4/endonuclease Cas1 fusion (541 aa).

Residues 1–179 (MGIHSLLYCE…NCSLAPVCLP (179 aa)) form a CRISPR-associated exonuclease Cas4 region. Cys9 provides a ligand contact to [4Fe-4S] cluster. Mn(2+)-binding residues include Asp65 and Glu78. [4Fe-4S] cluster is bound by residues Cys168, Cys171, and Cys177. The segment at 204–541 (TLHVFGHDSR…ANIFAQARLR (338 aa)) is CRISPR-associated endonuclease Cas1. The Mn(2+) site is built by Glu365, His433, and Glu448.

This sequence in the N-terminal section; belongs to the CRISPR-associated exonuclease Cas4 family. It in the C-terminal section; belongs to the CRISPR-associated endonuclease Cas1 family. Homodimer, forms a heterotetramer with a Cas2 homodimer. The cofactor is [4Fe-4S] cluster. Mg(2+) is required as a cofactor. Mn(2+) serves as cofactor.

It carries out the reaction exonucleolytic cleavage in the 5'- to 3'-direction to yield nucleoside 3'-phosphates.. CRISPR (clustered regularly interspaced short palindromic repeat), is an adaptive immune system that provides protection against mobile genetic elements (viruses, transposable elements and conjugative plasmids). CRISPR clusters contain spacers, sequences complementary to antecedent mobile elements, and target invading nucleic acids. CRISPR clusters are transcribed and processed into CRISPR RNA (crRNA). The Cas4 region acts as a ssDNA exonuclease, while the Cas1 region acts as a dsDNA endonuclease. Involved in the integration of spacer DNA into the CRISPR cassette. This Leptospira interrogans serogroup Icterohaemorrhagiae serovar Lai (strain 56601) protein is CRISPR-associated exonuclease Cas4/endonuclease Cas1 fusion (cas4-cas1).